A 377-amino-acid chain; its full sequence is 3-dehydroquinate synthase (377 aa).

NAD(+)-binding positions include 113 to 117 (GVIGD), 137 to 138 (TT), K150, K159, and 177 to 180 (FLDT). Zn(2+)-binding residues include E192, H254, and H273.

This sequence belongs to the sugar phosphate cyclases superfamily. Dehydroquinate synthase family. It depends on Co(2+) as a cofactor. The cofactor is Zn(2+). Requires NAD(+) as cofactor.

It localises to the cytoplasm. The catalysed reaction is 7-phospho-2-dehydro-3-deoxy-D-arabino-heptonate = 3-dehydroquinate + phosphate. Its pathway is metabolic intermediate biosynthesis; chorismate biosynthesis; chorismate from D-erythrose 4-phosphate and phosphoenolpyruvate: step 2/7. Its function is as follows. Catalyzes the conversion of 3-deoxy-D-arabino-heptulosonate 7-phosphate (DAHP) to dehydroquinate (DHQ). This Bartonella quintana (strain Toulouse) (Rochalimaea quintana) protein is 3-dehydroquinate synthase.